Here is a 302-residue protein sequence, read N- to C-terminus: Sulfate adenylyltransferase subunit 2 (302 aa).

Residues 280-302 (RQGRLIDSDQSASMEQKKRQGYF) are disordered.

Belongs to the PAPS reductase family. CysD subfamily. As to quaternary structure, heterodimer composed of CysD, the smaller subunit, and CysN.

It catalyses the reaction sulfate + ATP + H(+) = adenosine 5'-phosphosulfate + diphosphate. The protein operates within sulfur metabolism; hydrogen sulfide biosynthesis; sulfite from sulfate: step 1/3. Its function is as follows. With CysN forms the ATP sulfurylase (ATPS) that catalyzes the adenylation of sulfate producing adenosine 5'-phosphosulfate (APS) and diphosphate, the first enzymatic step in sulfur assimilation pathway. APS synthesis involves the formation of a high-energy phosphoric-sulfuric acid anhydride bond driven by GTP hydrolysis by CysN coupled to ATP hydrolysis by CysD. This chain is Sulfate adenylyltransferase subunit 2, found in Shewanella sp. (strain ANA-3).